We begin with the raw amino-acid sequence, 327 residues long: Undecaprenyl-phosphate 4-deoxy-4-formamido-L-arabinose transferase (327 aa).

The Cytoplasmic portion of the chain corresponds to 1–235 (MFDAAPIKKV…TCLTTTPLRL (235 aa)). The helical transmembrane segment at 236–256 (LSLLGSVIAIGGFSLSVLLIV) threads the bilayer. The Periplasmic portion of the chain corresponds to 257-269 (LRLALGPQWAAEG). Residues 270–290 (VFMLFAVLFTFIGAQFIGMGL) traverse the membrane as a helical segment. Residues 291–327 (LGEYIGRIYNDVRARPRYFVQQVIYPESTPFTEESHQ) lie on the Cytoplasmic side of the membrane.

It belongs to the glycosyltransferase 2 family.

It is found in the cell inner membrane. The catalysed reaction is UDP-4-deoxy-4-formamido-beta-L-arabinose + di-trans,octa-cis-undecaprenyl phosphate = 4-deoxy-4-formamido-alpha-L-arabinopyranosyl di-trans,octa-cis-undecaprenyl phosphate + UDP. Its pathway is glycolipid biosynthesis; 4-amino-4-deoxy-alpha-L-arabinose undecaprenyl phosphate biosynthesis; 4-amino-4-deoxy-alpha-L-arabinose undecaprenyl phosphate from UDP-4-deoxy-4-formamido-beta-L-arabinose and undecaprenyl phosphate: step 1/2. The protein operates within bacterial outer membrane biogenesis; lipopolysaccharide biosynthesis. Functionally, catalyzes the transfer of 4-deoxy-4-formamido-L-arabinose from UDP to undecaprenyl phosphate. The modified arabinose is attached to lipid A and is required for resistance to polymyxin and cationic antimicrobial peptides. The chain is Undecaprenyl-phosphate 4-deoxy-4-formamido-L-arabinose transferase from Salmonella choleraesuis (strain SC-B67).